The sequence spans 195 residues: Pyridoxal 5'-phosphate synthase subunit PdxT (195 aa).

46-48 (GES) serves as a coordination point for L-glutamine. Residue C78 is the Nucleophile of the active site. Residues R105 and 133–134 (IR) each bind L-glutamine. Residues H169 and E171 each act as charge relay system in the active site.

It belongs to the glutaminase PdxT/SNO family. In terms of assembly, in the presence of PdxS, forms a dodecamer of heterodimers. Only shows activity in the heterodimer.

The catalysed reaction is aldehydo-D-ribose 5-phosphate + D-glyceraldehyde 3-phosphate + L-glutamine = pyridoxal 5'-phosphate + L-glutamate + phosphate + 3 H2O + H(+). It carries out the reaction L-glutamine + H2O = L-glutamate + NH4(+). It functions in the pathway cofactor biosynthesis; pyridoxal 5'-phosphate biosynthesis. Functionally, catalyzes the hydrolysis of glutamine to glutamate and ammonia as part of the biosynthesis of pyridoxal 5'-phosphate. The resulting ammonia molecule is channeled to the active site of PdxS. This Geobacillus thermodenitrificans (strain NG80-2) protein is Pyridoxal 5'-phosphate synthase subunit PdxT.